We begin with the raw amino-acid sequence, 286 residues long: MASLRDIKAKINSTKKTSQITKAMEMVSASKLNRAEQNAKSFVPYMEKIQEVVASIAQGSKGINHPMLNSRPVKRTGYIVITSDRGLAGGYNSNVLRTVSNVIRERHNMDSNQYSIIVLGRLGRDYLKRRGFNIIDEVVGLSDHPSFTDIKDIASRAIAMFADGAYDELYIYYNHYVSKISQEVTENKILPLTDVASDKPTTAYEFEPSEEEILKVLLPQYAESLVYGALLDGKASEHAARMTAMKSATDNAMEVIDSLTLSFNRARQAAITQEITEIVGGVAALE.

Belongs to the ATPase gamma chain family. In terms of assembly, F-type ATPases have 2 components, CF(1) - the catalytic core - and CF(0) - the membrane proton channel. CF(1) has five subunits: alpha(3), beta(3), gamma(1), delta(1), epsilon(1). CF(0) has three main subunits: a, b and c.

The protein localises to the cell membrane. Functionally, produces ATP from ADP in the presence of a proton gradient across the membrane. The gamma chain is believed to be important in regulating ATPase activity and the flow of protons through the CF(0) complex. This is ATP synthase gamma chain from Bacillus mycoides (strain KBAB4) (Bacillus weihenstephanensis).